The sequence spans 326 residues: Delta-aminolevulinic acid dehydratase (326 aa).

Zn(2+) contacts are provided by Cys-125, Cys-127, and Cys-135. Lys-200 acts as the Schiff-base intermediate with substrate in catalysis. 5-aminolevulinate contacts are provided by Arg-210 and Arg-222. Glu-238 is a Mg(2+) binding site. The Schiff-base intermediate with substrate role is filled by Lys-253. Position 279 (Ser-279) interacts with 5-aminolevulinate.

Belongs to the ALAD family. As to quaternary structure, homooctamer. The cofactor is Zn(2+).

It carries out the reaction 2 5-aminolevulinate = porphobilinogen + 2 H2O + H(+). It participates in porphyrin-containing compound metabolism; protoporphyrin-IX biosynthesis; coproporphyrinogen-III from 5-aminolevulinate: step 1/4. Functionally, catalyzes an early step in the biosynthesis of tetrapyrroles. Binds two molecules of 5-aminolevulinate per subunit, each at a distinct site, and catalyzes their condensation to form porphobilinogen. The chain is Delta-aminolevulinic acid dehydratase (hemB) from Methanothermobacter thermautotrophicus (strain ATCC 29096 / DSM 1053 / JCM 10044 / NBRC 100330 / Delta H) (Methanobacterium thermoautotrophicum).